The following is a 468-amino-acid chain: Lactate utilization protein B (468 aa).

4Fe-4S ferredoxin-type domains are found at residues 303-333 and 352-381; these read GTQF…GHAY and YENY…LHEL. Positions 312, 315, 318, 322, 365, 368, and 372 each coordinate [4Fe-4S] cluster. The segment at 442-468 is disordered; that stretch reads PAWTDSKDLPQPNKQTVRDWFKKRGNA. Basic and acidic residues predominate over residues 457-468; it reads TVRDWFKKRGNA.

Belongs to the LutB/YkgF family.

Functionally, is involved in L-lactate degradation and allows cells to grow with lactate as the sole carbon source. Has probably a role as an electron transporter during oxidation of L-lactate. This Exiguobacterium sp. (strain ATCC BAA-1283 / AT1b) protein is Lactate utilization protein B.